We begin with the raw amino-acid sequence, 124 residues long: Small ribosomal subunit protein bS6 (124 aa).

A disordered region spans residues 96–124 (ETAPSPMMKEVQREEARKAAQTTTEGQAA). The segment covering 115 to 124 (AQTTTEGQAA) has biased composition (polar residues).

This sequence belongs to the bacterial ribosomal protein bS6 family.

Binds together with bS18 to 16S ribosomal RNA. This chain is Small ribosomal subunit protein bS6, found in Cupriavidus necator (strain ATCC 17699 / DSM 428 / KCTC 22496 / NCIMB 10442 / H16 / Stanier 337) (Ralstonia eutropha).